The primary structure comprises 295 residues: Acetylglutamate kinase (295 aa).

Substrate contacts are provided by residues 66–67, arginine 88, and asparagine 193; that span reads GG.

Belongs to the acetylglutamate kinase family. ArgB subfamily.

It localises to the cytoplasm. The catalysed reaction is N-acetyl-L-glutamate + ATP = N-acetyl-L-glutamyl 5-phosphate + ADP. Its pathway is amino-acid biosynthesis; L-arginine biosynthesis; N(2)-acetyl-L-ornithine from L-glutamate: step 2/4. Functionally, catalyzes the ATP-dependent phosphorylation of N-acetyl-L-glutamate. The chain is Acetylglutamate kinase from Rhizobium leguminosarum bv. trifolii (strain WSM2304).